A 448-amino-acid chain; its full sequence is Glutamate--tRNA ligase 1 (448 aa).

Positions 10–20 (PSPTGMLHVGN) match the 'HIGH' region motif. A 'KMSKS' region motif is present at residues 240 to 244 (KISKR). Position 243 (Lys243) interacts with ATP.

This sequence belongs to the class-I aminoacyl-tRNA synthetase family. Glutamate--tRNA ligase type 1 subfamily. Monomer.

It localises to the cytoplasm. It carries out the reaction tRNA(Glu) + L-glutamate + ATP = L-glutamyl-tRNA(Glu) + AMP + diphosphate. Functionally, catalyzes the attachment of glutamate to tRNA(Glu) in a two-step reaction: glutamate is first activated by ATP to form Glu-AMP and then transferred to the acceptor end of tRNA(Glu). This Rickettsia typhi (strain ATCC VR-144 / Wilmington) protein is Glutamate--tRNA ligase 1.